Here is a 453-residue protein sequence, read N- to C-terminus: Ankyrin repeat and SOCS box protein 16 (453 aa).

ANK repeat units follow at residues 56-85 (CRDP…AANM), 110-139 (KQTA…ELDA), 142-171 (GGRA…KANV), 175-204 (EGMT…SVNV), 209-238 (SEVT…DVAL), 242-279 (QGET…DPQA), and 283-312 (KRHT…SPGV). One can recognise an SOCS box domain in the interval 397-453 (FYSSALSMENQPRQLQHLARLAVRAQLGSHCRQAAAQLPLPPLLRDYLLLGVEGRIQ).

The protein belongs to the ankyrin SOCS box (ASB) family.

It functions in the pathway protein modification; protein ubiquitination. Functionally, may be a substrate-recognition component of a SCF-like ECS (Elongin-Cullin-SOCS-box protein) E3 ubiquitin-protein ligase complex which mediates the ubiquitination and subsequent proteasomal degradation of target proteins. The chain is Ankyrin repeat and SOCS box protein 16 (Asb16) from Mus musculus (Mouse).